Reading from the N-terminus, the 316-residue chain is Pantothenate kinase (316 aa).

95 to 102 (GSVSVGKS) serves as a coordination point for ATP.

This sequence belongs to the prokaryotic pantothenate kinase family.

It localises to the cytoplasm. It catalyses the reaction (R)-pantothenate + ATP = (R)-4'-phosphopantothenate + ADP + H(+). It participates in cofactor biosynthesis; coenzyme A biosynthesis; CoA from (R)-pantothenate: step 1/5. The sequence is that of Pantothenate kinase from Haemophilus ducreyi (strain 35000HP / ATCC 700724).